Consider the following 73-residue polypeptide: Lactogenin (73 aa).

At Q1 the chain carries Pyrrolidone carboxylic acid.

Belongs to the pancreatic ribonuclease family. Milk.

The protein resides in the secreted. Functionally, secretory RNase specific towards pyrimidine bases, with higher activity towards poly C than poly U. Inhibits cell-free translation. This chain is Lactogenin, found in Bos taurus (Bovine).